The chain runs to 376 residues: E3 ubiquitin-protein ligase RNF133 (376 aa).

A PA domain is found at 65–167 (SSTLKRVAGV…LKGTEIFHLI (103 aa)). Residues 190–210 (YLVSFVIVTTATLAYFIFYHI) traverse the membrane as a helical segment. The segment at 256 to 297 (CVICFERYKPNDIVRILTCKHFFHKNCIDPWILPHGTCPICK) adopts an RING-type; atypical zinc-finger fold. The disordered stretch occupies residues 327 to 376 (ETLSPSEEETNNEVSPAGTSDKVIHVEENPTSQNNDIQPHSVVEDVHPSP). Positions 355–364 (NPTSQNNDIQ) are enriched in polar residues.

As to quaternary structure, interacts with E3 ligase UBE2J1. Auto-ubiquitinated. As to expression, expression is testis-specific.

Its subcellular location is the endoplasmic reticulum membrane. It carries out the reaction S-ubiquitinyl-[E2 ubiquitin-conjugating enzyme]-L-cysteine + [acceptor protein]-L-lysine = [E2 ubiquitin-conjugating enzyme]-L-cysteine + N(6)-ubiquitinyl-[acceptor protein]-L-lysine.. Its pathway is protein modification; protein ubiquitination. Functionally, has E3 ubiquitin-protein ligase activity. Plays a role in male fecundity through the interaction with the E2 ubituitin-protein ligase UBE2J1. In Homo sapiens (Human), this protein is E3 ubiquitin-protein ligase RNF133.